Consider the following 449-residue polypeptide: Early 53 kDa protein (449 aa).

Residues 1 to 68 form a disordered region; it reads MNRFFRENNI…CTSPAKPLEH (68 aa). Residues 31-42 are compositionally biased toward pro residues; it reads NSPPSPVRPPPK. Residues 379–399 form a C4-type zinc finger; sequence CKLCKKTKLYYKNPVLYCTKC.

It localises to the virion. Its subcellular location is the host cytoplasm. The protein resides in the host nucleus. The protein localises to the host cell membrane. In terms of biological role, may act as a packaging protein or as a structural component associated with intranuclear baculovirus virion assembly. The protein is Early 53 kDa protein (ME53) of Autographa californica nuclear polyhedrosis virus (AcMNPV).